We begin with the raw amino-acid sequence, 467 residues long: MEYRSHISVMGPVVDVKFKSGQYPESINALKSTSRVRQNAVDVTVTLEVAIALGDDSVRTVAMGSTDGLYVYRGTDTGAPISVPVGEATLGRVFNVLGEAIDLGEPVAADDKRDPIHREAPKFEELSTTTEILETGIKVVDLLAPYIIGGKIGLFGGAGVGKTVLIQELINNIAQEHGVISVFAGVGERTREGNDLYHEMTDSGVIKKSAMVFGQMNEPPGARMAVALSGLTMAEHFRDRDGQDVLLFVDNISFTQAGSEVSALLGRMPSAVGYQPTLATEMGQLQERITSTKVGSVTSIQAIYVPADDYTDPAPATTFAHLDATTNLERKLSEMGIYPAVDPLASTSRALSPEIVGEEHYSVARQVQQTLQKYKELQDIIAILGMDELSEEDKLVVHRARRIQFFLSQNFHVAEQFTGQKGSYVPVKETIKGFKESLDGKYDDLPEDAFRLVGRIEEVIEKGKQTA.

156–163 (GGAGVGKT) provides a ligand contact to ATP.

This sequence belongs to the ATPase alpha/beta chains family. As to quaternary structure, F-type ATPases have 2 components, CF(1) - the catalytic core - and CF(0) - the membrane proton channel. CF(1) has five subunits: alpha(3), beta(3), gamma(1), delta(1), epsilon(1). CF(0) has three main subunits: a(1), b(2) and c(9-12). The alpha and beta chains form an alternating ring which encloses part of the gamma chain. CF(1) is attached to CF(0) by a central stalk formed by the gamma and epsilon chains, while a peripheral stalk is formed by the delta and b chains.

The protein localises to the cell membrane. It carries out the reaction ATP + H2O + 4 H(+)(in) = ADP + phosphate + 5 H(+)(out). In terms of biological role, produces ATP from ADP in the presence of a proton gradient across the membrane. The catalytic sites are hosted primarily by the beta subunits. The chain is ATP synthase subunit beta from Cytobacillus firmus (Bacillus firmus).